A 116-amino-acid polypeptide reads, in one-letter code: Flagellar transcriptional regulator FlhD (116 aa).

This sequence belongs to the FlhD family. Homodimer; disulfide-linked. Forms a heterohexamer composed of two FlhC and four FlhD subunits. Each FlhC binds a FlhD dimer, forming a heterotrimer, and a hexamer assembles by dimerization of two heterotrimers.

The protein resides in the cytoplasm. In terms of biological role, functions in complex with FlhC as a master transcriptional regulator that regulates transcription of several flagellar and non-flagellar operons by binding to their promoter region. Activates expression of class 2 flagellar genes, including fliA, which is a flagellum-specific sigma factor that turns on the class 3 genes. Also regulates genes whose products function in a variety of physiological pathways. The polypeptide is Flagellar transcriptional regulator FlhD (Enterobacter sp. (strain 22)).